The sequence spans 1380 residues: DNA-directed RNA polymerase subunit beta (1380 aa).

This sequence belongs to the RNA polymerase beta chain family. The RNAP catalytic core consists of 2 alpha, 1 beta, 1 beta' and 1 omega subunit. When a sigma factor is associated with the core the holoenzyme is formed, which can initiate transcription.

The catalysed reaction is RNA(n) + a ribonucleoside 5'-triphosphate = RNA(n+1) + diphosphate. Functionally, DNA-dependent RNA polymerase catalyzes the transcription of DNA into RNA using the four ribonucleoside triphosphates as substrates. The chain is DNA-directed RNA polymerase subunit beta from Nitrobacter hamburgensis (strain DSM 10229 / NCIMB 13809 / X14).